Reading from the N-terminus, the 2581-residue chain is Chromodomain-helicase-DNA-binding protein 8 (2581 aa).

Disordered stretches follow at residues 22-114 (DDSF…QTST), 253-283 (VKGSAPAGNPGATGPPLKPAVTLTSTPTQGE), 349-392 (QKIQ…SPGQ), 429-582 (ALSS…QVKR), and 596-615 (DEEEEEVDVTGPIKPEPILP). Composition is skewed to polar residues over residues 42–51 (SLDSLDQMNQ) and 94–114 (DYTTQPASQEQPAQPVLQTST). The segment covering 255-267 (GSAPAGNPGATGP) has biased composition (low complexity). Residues 355–370 (PQPPSSQPQPQQPPST) are compositionally biased toward pro residues. Residue Ser432 is modified to Phosphoserine. 2 stretches are compositionally biased toward basic and acidic residues: residues 445–462 (GMEENRRLEHQKKQEKAN) and 493–516 (RPEEEGEKKRRKKSAGERLKEEKP). 2 positions are modified to phosphoserine: Ser553 and Ser562. The span at 572–582 (QKRRSNRQVKR) shows a compositional bias: basic residues. Residue Lys609 forms a Glycyl lysine isopeptide (Lys-Gly) (interchain with G-Cter in SUMO) linkage. Chromo domains lie at 642–709 (AIVD…AQMR) and 724–790 (VEVD…RVNR). In terms of domain architecture, Helicase ATP-binding spans 823–997 (LFNWYNRQNC…FSLLHFLEPS (175 aa)). 836–843 (DEMGLGKT) contributes to the ATP binding site. A DEAH box motif is present at residues 948–951 (DEAH). Residues 1137-1288 (LIDKLLPKLK…KAVLQSMSGR (152 aa)) form the Helicase C-terminal domain. Ser1420 and Ser1424 each carry phosphoserine. The segment at 1692–1712 (EDPEYKPLQGPPKDQDDEGDP) is disordered. Positions 1789–2302 (IARREKQQRW…LVELEVECME (514 aa)) are interaction with FAM124B. Residues Ser1976 and Ser1978 each carry the phosphoserine modification. The disordered stretch occupies residues 1991–2116 (SRTASPLPLR…TDQSRSKLYD (126 aa)). Thr1993 is subject to Phosphothreonine. Phosphoserine is present on residues Ser1995 and Ser2008. A compositionally biased stretch (polar residues) spans 2011–2021 (ETATQVPSLES). Lys2025 participates in a covalent cross-link: Glycyl lysine isopeptide (Lys-Gly) (interchain with G-Cter in SUMO2). Residue Ser2046 is modified to Phosphoserine. At Thr2051 the chain carries Phosphothreonine. Positions 2064–2073 (EDEDDSDSEL) are enriched in acidic residues. A phosphoserine mark is found at Ser2069 and Ser2071. The span at 2076–2095 (SKLSPSSSSSSSSSSSSSST) shows a compositional bias: low complexity. Positions 2103–2116 (EEKLTDQSRSKLYD) are enriched in basic and acidic residues. Phosphoserine is present on residues Ser2182, Ser2200, and Ser2202. The disordered stretch occupies residues 2189–2229 (GILGPGNHLLDSPSLTPGEYGDSPVPTPRSSSAASMAEEEA). Position 2204 is a phosphothreonine (Thr2204). Ser2211 bears the Phosphoserine mark. Phosphothreonine is present on Thr2215. Positions 2218 to 2229 (SSSAASMAEEEA) are enriched in low complexity. Ser2223 is subject to Phosphoserine. Lys2256 participates in a covalent cross-link: Glycyl lysine isopeptide (Lys-Gly) (interchain with G-Cter in SUMO2). Residues 2481 to 2581 (PSSPHVDSST…NSDSSEDADD (101 aa)) form a disordered region. The segment covering 2492 to 2510 (LHHHHHHPHPHHHHHHHPG) has biased composition (basic residues). A Phosphoserine modification is found at Ser2519. Residues 2519–2528 (SPVTTASGTT) show a composition bias toward polar residues. Positions 2536-2550 (PEEDDDEDEEDDDDL) are enriched in acidic residues.

Belongs to the SNF2/RAD54 helicase family. CHD8 subfamily. As to quaternary structure, interacts with p53/TP53, histone H1, CTNNB1, CTCF and PIAS3. Component of some MLL1/MLL complex, at least composed of the core components KMT2A/MLL1, ASH2L, HCFC1/HCF1, WDR5 and RBBP5, as well as the facultative components BACC1, CHD8, E2F6, HSP70, INO80C, KANSL1, LAS1L, MAX, MCRS1, MGA, KAT8/MOF, PELP1, PHF20, PRP31, RING2, RUVB1/TIP49A, RUVB2/TIP49B, SENP3, TAF1, TAF4, TAF6, TAF7, TAF9 and TEX10. Interacts with CHD7. Interacts with FAM124B. Interacts with TLK2. Interacts with HNRNPL in an RNA-dependent manner. Post-translationally, sumoylated.

The protein resides in the nucleus. It carries out the reaction ATP + H2O = ADP + phosphate + H(+). In terms of biological role, ATP-dependent chromatin-remodeling factor, it slides nucleosomes along DNA; nucleosome sliding requires ATP. Acts as a transcription repressor by remodeling chromatin structure and recruiting histone H1 to target genes. Suppresses p53/TP53-mediated apoptosis by recruiting histone H1 and preventing p53/TP53 transactivation activity. Acts as a negative regulator of Wnt signaling pathway by regulating beta-catenin (CTNNB1) activity. Negatively regulates CTNNB1-targeted gene expression by being recruited specifically to the promoter regions of several CTNNB1 responsive genes. Involved in both enhancer blocking and epigenetic remodeling at chromatin boundary via its interaction with CTCF. Acts as a suppressor of STAT3 activity by suppressing the LIF-induced STAT3 transcriptional activity. Also acts as a transcription activator via its interaction with ZNF143 by participating in efficient U6 RNA polymerase III transcription. Regulates alternative splicing of a core group of genes involved in neuronal differentiation, cell cycle and DNA repair. Enables H3K36me3-coupled transcription elongation and co-transcriptional RNA processing likely via interaction with HNRNPL. The polypeptide is Chromodomain-helicase-DNA-binding protein 8 (Homo sapiens (Human)).